The primary structure comprises 410 residues: Arginine deiminase (410 aa).

The active-site Amidino-cysteine intermediate is the Cys400.

This sequence belongs to the arginine deiminase family.

Its subcellular location is the cytoplasm. It catalyses the reaction L-arginine + H2O = L-citrulline + NH4(+). It participates in amino-acid degradation; L-arginine degradation via ADI pathway; carbamoyl phosphate from L-arginine: step 1/2. This Streptococcus agalactiae serotype III (strain NEM316) protein is Arginine deiminase.